The chain runs to 332 residues: Glucokinase (332 aa).

Position 15–20 (15–20) interacts with ATP; that stretch reads ADIGGT.

It belongs to the bacterial glucokinase family.

It localises to the cytoplasm. The catalysed reaction is D-glucose + ATP = D-glucose 6-phosphate + ADP + H(+). The chain is Glucokinase from Campylobacter jejuni subsp. doylei (strain ATCC BAA-1458 / RM4099 / 269.97).